A 743-amino-acid polypeptide reads, in one-letter code: Pentatricopeptide repeat-containing protein At2g16880 (743 aa).

PPR repeat units lie at residues 130 to 164 (SKALFDIALSAYLHEGKPHVALQIFQKMIRLKLKP), 165 to 202 (NLLTCNTLLIGLVRYPSSFSISSAREVFDDMVKIGVSL), 203 to 233 (NVQTFNVLVNGYCLEGKLEDALGMLERMVSE), 239 to 273 (DNVTYNTILKAMSKKGRLSDLKELLLDMKKNGLVP), 274 to 308 (NRVTYNNLVYGYCKLGSLKEAFQIVELMKQTNVLP), 309 to 343 (DLCTYNILINGLCNAGSMREGLELMDAMKSLKLQP), 344 to 378 (DVVTYNTLIDGCFELGLSLEARKLMEQMENDGVKA), 379 to 414 (NQVTHNISLKWLCKEEKREAVTRKVKELVDMHGFSP), 415 to 449 (DIVTYHTLIKAYLKVGDLSGALEMMREMGQKGIKM), 450 to 484 (NTITLNTILDALCKERKLDEAHNLLNSAHKRGFIV), 485 to 519 (DEVTYGTLIMGFFREEKVEKALEMWDEMKKVKITP), 520 to 554 (TVSTFNSLIGGLCHHGKTELAMEKFDELAESGLLP), 555 to 589 (DDSTFNSIILGYCKEGRVEKAFEFYNESIKHSFKP), 590 to 620 (DNYTCNILLNGLCKEGMTEKALNFFNTLIEE), 624 to 658 (DTVTYNTMISAFCKDKKLKEAYDLLSEMEEKGLEP), and 659 to 689 (DRFTYNSFISLLMEDGKLSETDELLKKFSGK).

Belongs to the PPR family. P subfamily.

The protein is Pentatricopeptide repeat-containing protein At2g16880 of Arabidopsis thaliana (Mouse-ear cress).